Here is a 325-residue protein sequence, read N- to C-terminus: tRNA N(3)-methylcytidine methyltransferase Mettl2 (325 aa).

Residues Trp96 and Tyr100 each contribute to the S-adenosyl-L-methionine site. Residues Tyr100, His112, Glu138, Gly140, Asp165, Asp191, and Ile212 each coordinate S-adenosyl-L-homocysteine. Gly140, Asp165, Asp191, and Ile212 together coordinate S-adenosyl-L-methionine.

This sequence belongs to the methyltransferase superfamily. METL family. In terms of assembly, interacts with Psn. Widely expressed. Expressed in ovaries, head, thorax and abdomen of adult flies, and in the CNS of third instar larvae. Isoform 2 is predominantly expressed in larvae and in adult tissues that have been tested.

Its function is as follows. Probable methyltransferase. The sequence is that of tRNA N(3)-methylcytidine methyltransferase Mettl2 from Drosophila melanogaster (Fruit fly).